The following is a 113-amino-acid chain: U11-theraphotoxin-Hhn1a (113 aa).

The N-terminal stretch at 1–21 (MNTVRVTFLLVFVLAVSLGQA) is a signal peptide. The propeptide occupies 22-74 (DKDENRMEMQEKTEQGESYLDFAENLLLQKLEELEAKLLEEDSEESRNSRQKR). 3 disulfides stabilise this stretch: C75/C90, C82/C95, and C89/C110.

Belongs to the neurotoxin 14 (magi-1) family. 01 (HNTX-16) subfamily. As to expression, expressed by the venom gland.

The protein resides in the secreted. Probable ion channel inhibitor. The polypeptide is U11-theraphotoxin-Hhn1a (Cyriopagopus hainanus (Chinese bird spider)).